Here is a 620-residue protein sequence, read N- to C-terminus: 1-deoxy-D-xylulose-5-phosphate synthase (620 aa).

Thiamine diphosphate contacts are provided by residues histidine 80 and 121–123 (GHS). Aspartate 152 contributes to the Mg(2+) binding site. Thiamine diphosphate-binding positions include 153–154 (GA), asparagine 181, tyrosine 288, and glutamate 370. Asparagine 181 provides a ligand contact to Mg(2+).

This sequence belongs to the transketolase family. DXPS subfamily. In terms of assembly, homodimer. Requires Mg(2+) as cofactor. Thiamine diphosphate is required as a cofactor.

The catalysed reaction is D-glyceraldehyde 3-phosphate + pyruvate + H(+) = 1-deoxy-D-xylulose 5-phosphate + CO2. Its pathway is metabolic intermediate biosynthesis; 1-deoxy-D-xylulose 5-phosphate biosynthesis; 1-deoxy-D-xylulose 5-phosphate from D-glyceraldehyde 3-phosphate and pyruvate: step 1/1. Its function is as follows. Catalyzes the acyloin condensation reaction between C atoms 2 and 3 of pyruvate and glyceraldehyde 3-phosphate to yield 1-deoxy-D-xylulose-5-phosphate (DXP). This is 1-deoxy-D-xylulose-5-phosphate synthase from Escherichia coli (strain SMS-3-5 / SECEC).